The following is a 434-amino-acid chain: Nicotinate phosphoribosyltransferase (434 aa).

Residue His-242 is modified to Phosphohistidine; by autocatalysis.

Belongs to the NAPRTase family. Transiently phosphorylated on a His residue during the reaction cycle. Phosphorylation strongly increases the affinity for substrates and increases the rate of nicotinate D-ribonucleotide production. Dephosphorylation regenerates the low-affinity form of the enzyme, leading to product release.

It carries out the reaction nicotinate + 5-phospho-alpha-D-ribose 1-diphosphate + ATP + H2O = nicotinate beta-D-ribonucleotide + ADP + phosphate + diphosphate. The protein operates within cofactor biosynthesis; NAD(+) biosynthesis; nicotinate D-ribonucleotide from nicotinate: step 1/1. Its function is as follows. Catalyzes the synthesis of beta-nicotinate D-ribonucleotide from nicotinate and 5-phospho-D-ribose 1-phosphate at the expense of ATP. This Allorhizobium ampelinum (strain ATCC BAA-846 / DSM 112012 / S4) (Agrobacterium vitis (strain S4)) protein is Nicotinate phosphoribosyltransferase.